Here is a 202-residue protein sequence, read N- to C-terminus: Holliday junction branch migration complex subunit RuvA (202 aa).

The domain I stretch occupies residues 1–63 (MIEYLKGAIV…EDAHLLYGFS (63 aa)). Residues 64 to 142 (TKEERTLFGQ…LETSSDEILS (79 aa)) are domain II. The flexible linker stretch occupies residues 143–153 (ARTAVGDAALN). The tract at residues 153–202 (NTIASGEEAISALKMLGFADPAIRKAVKSILSEDSSLAVEDIIKRALRML) is domain III.

It belongs to the RuvA family. Homotetramer. Forms an RuvA(8)-RuvB(12)-Holliday junction (HJ) complex. HJ DNA is sandwiched between 2 RuvA tetramers; dsDNA enters through RuvA and exits via RuvB. An RuvB hexamer assembles on each DNA strand where it exits the tetramer. Each RuvB hexamer is contacted by two RuvA subunits (via domain III) on 2 adjacent RuvB subunits; this complex drives branch migration. In the full resolvosome a probable DNA-RuvA(4)-RuvB(12)-RuvC(2) complex forms which resolves the HJ.

Its subcellular location is the cytoplasm. Functionally, the RuvA-RuvB-RuvC complex processes Holliday junction (HJ) DNA during genetic recombination and DNA repair, while the RuvA-RuvB complex plays an important role in the rescue of blocked DNA replication forks via replication fork reversal (RFR). RuvA specifically binds to HJ cruciform DNA, conferring on it an open structure. The RuvB hexamer acts as an ATP-dependent pump, pulling dsDNA into and through the RuvAB complex. HJ branch migration allows RuvC to scan DNA until it finds its consensus sequence, where it cleaves and resolves the cruciform DNA. The protein is Holliday junction branch migration complex subunit RuvA of Porphyromonas gingivalis (strain ATCC BAA-308 / W83).